The primary structure comprises 466 residues: Ras-GEF domain-containing family member 1C (466 aa).

Residues 1 to 37 (MPQTLSASDMVTPGSLSPPPTEPTDGEQAGQPLLDGA) form a disordered region. The region spanning 34–164 (LDGAPSSASL…LLQALHQKLA (131 aa)) is the N-terminal Ras-GEF domain. The region spanning 200–446 (DPYTLAQQLT…YLASYESESP (247 aa)) is the Ras-GEF domain.

Functionally, guanine nucleotide exchange factor (GEF). The protein is Ras-GEF domain-containing family member 1C (RASGEF1C) of Homo sapiens (Human).